The following is a 431-amino-acid chain: Histidinol dehydrogenase (431 aa).

Residues Tyr124, Gln187, and Asn210 each contribute to the NAD(+) site. The substrate site is built by Ser236, Gln258, and His261. Positions 258 and 261 each coordinate Zn(2+). Catalysis depends on proton acceptor residues Glu325 and His326. Positions 326, 359, 413, and 418 each coordinate substrate. Asp359 contributes to the Zn(2+) binding site. His418 is a Zn(2+) binding site.

The protein belongs to the histidinol dehydrogenase family. Zn(2+) is required as a cofactor.

The catalysed reaction is L-histidinol + 2 NAD(+) + H2O = L-histidine + 2 NADH + 3 H(+). The protein operates within amino-acid biosynthesis; L-histidine biosynthesis; L-histidine from 5-phospho-alpha-D-ribose 1-diphosphate: step 9/9. Functionally, catalyzes the sequential NAD-dependent oxidations of L-histidinol to L-histidinaldehyde and then to L-histidine. This is Histidinol dehydrogenase from Legionella pneumophila subsp. pneumophila (strain Philadelphia 1 / ATCC 33152 / DSM 7513).